Consider the following 273-residue polypeptide: 4-hydroxy-tetrahydrodipicolinate reductase (273 aa).

Residues 12-17 and Glu38 each bind NAD(+); that span reads GAGGRM. Position 39 (Arg39) interacts with NADP(+). NAD(+) contacts are provided by residues 102–104 and 126–129; these read GTT and AANF. His159 serves as the catalytic Proton donor/acceptor. (S)-2,3,4,5-tetrahydrodipicolinate is bound at residue His160. The active-site Proton donor is Lys163. 169–170 contacts (S)-2,3,4,5-tetrahydrodipicolinate; that stretch reads GT.

Belongs to the DapB family. Homotetramer.

The protein resides in the cytoplasm. The catalysed reaction is (S)-2,3,4,5-tetrahydrodipicolinate + NAD(+) + H2O = (2S,4S)-4-hydroxy-2,3,4,5-tetrahydrodipicolinate + NADH + H(+). It catalyses the reaction (S)-2,3,4,5-tetrahydrodipicolinate + NADP(+) + H2O = (2S,4S)-4-hydroxy-2,3,4,5-tetrahydrodipicolinate + NADPH + H(+). The protein operates within amino-acid biosynthesis; L-lysine biosynthesis via DAP pathway; (S)-tetrahydrodipicolinate from L-aspartate: step 4/4. In terms of biological role, catalyzes the conversion of 4-hydroxy-tetrahydrodipicolinate (HTPA) to tetrahydrodipicolinate. The sequence is that of 4-hydroxy-tetrahydrodipicolinate reductase from Salmonella dublin (strain CT_02021853).